A 442-amino-acid chain; its full sequence is MSSESLTVIVGLGKTGLSCAQFLAAKNQPFAVMDSREEPPEWENFIKTYPRVELIRGQFSEKLLNEAQEIILSPGVSLQEPLIAKQAAQGKSIIGDIELFARNVNKPIIAITGSNGKTTVTTVVGLMMKAAGRNVSVCGNIGEPVLEQITPEPDYYVLELSSFQLETTFSLRSQAATILNISEDHMNRYATLQDYLRAKQRIYTDCFIPIVNADEPEIWRHLPFNKKPLSFGLNNAADFSLAEHNQKTSIAYQGKILMPIQELKLNARHHLQNALAALALGTAAKIPIENMLHVLRDFSGIRHRCQWVRKYKEIDYYNDSKGTNVGATRAAIESLGQAAKGQLILIAGGQGKGADFSPLKDVVKRYVKQVILIGEDAPLLEKTLKEITVIKHADSMNEAVKRSTQAAKAGDIVLLSPACASFDMFTNYEHRGDVFTETVEAL.

Position 113–119 (113–119) interacts with ATP; it reads GSNGKTT.

It belongs to the MurCDEF family.

Its subcellular location is the cytoplasm. It carries out the reaction UDP-N-acetyl-alpha-D-muramoyl-L-alanine + D-glutamate + ATP = UDP-N-acetyl-alpha-D-muramoyl-L-alanyl-D-glutamate + ADP + phosphate + H(+). Its pathway is cell wall biogenesis; peptidoglycan biosynthesis. In terms of biological role, cell wall formation. Catalyzes the addition of glutamate to the nucleotide precursor UDP-N-acetylmuramoyl-L-alanine (UMA). This Coxiella burnetii (strain CbuG_Q212) (Coxiella burnetii (strain Q212)) protein is UDP-N-acetylmuramoylalanine--D-glutamate ligase.